Consider the following 335-residue polypeptide: UPF0353 protein MAP_1207 (335 aa).

The next 2 helical transmembrane spans lie at 18 to 38 and 67 to 87; these read WFFL…LMQL and LPAI…AGPT. One can recognise a VWFA domain in the interval 98–294; that stretch reads VVMLVIDVSQ…QELKSVYATL (197 aa). Residues 309–329 traverse the membrane as a helical segment; that stretch reads VGWVRLGALVLALAALTALLI.

Belongs to the UPF0353 family.

It localises to the cell membrane. The chain is UPF0353 protein MAP_1207 from Mycolicibacterium paratuberculosis (strain ATCC BAA-968 / K-10) (Mycobacterium paratuberculosis).